Consider the following 1119-residue polypeptide: Ubiquitin-associated protein 2 (1119 aa).

Residues 1-26 (MMTSVSSDHCRGAREKPQISAAQSTQ) are disordered. A compositionally biased stretch (basic and acidic residues) spans 8 to 17 (DHCRGAREKP). The UBA domain occupies 48–92 (KNDSDFEAKVKQLMEVTGKNQDECIVALHDCNGDVNKAINILLEG). Positions 105–130 (KKKNFAKENSENKENREKKSEKESSR) form a coiled coil. Positions 110–130 (AKENSENKENREKKSEKESSR) are enriched in basic and acidic residues. Disordered stretches follow at residues 110 to 202 (AKEN…YSDS), 385 to 476 (LGQF…SPST), 622 to 736 (VHNR…SSHQ), 853 to 905 (RDGS…VNPA), 937 to 966 (SAKQ…YSTG), 982 to 1020 (GGYA…GSVY), and 1082 to 1119 (HLPQ…YWTN). The residue at position 166 (R166) is an Omega-N-methylarginine. The segment covering 168–182 (KRARGRGFGRGRGRG) has biased composition (basic residues). Low complexity predominate over residues 389–407 (TTTPSTQQNSTSHPTTTTS). Phosphoserine occurs at positions 432, 439, 473, and 630. Residues 435 to 447 (LSQLSQRQQHQSQ) show a composition bias toward low complexity. Positions 651-662 (SQQTLDTPKTTG) are enriched in polar residues. Positions 663-678 (PPSALPSVSSLPSTTS) are enriched in low complexity. Over residues 679 to 694 (CTALLPSTSQHTGDLT) the composition is skewed to polar residues. 2 stretches are compositionally biased toward low complexity: residues 695–736 (SSPL…SSHQ) and 874–900 (SASP…AQQP). Over residues 943-957 (VNLSTPTPPFQQASG) the composition is skewed to polar residues. 2 stretches are compositionally biased toward low complexity: residues 1002-1011 (GVSVSSSTTG) and 1088-1102 (QSGS…SLQP).

May interact with ANXA2.

It is found in the nucleus. The protein localises to the chromosome. It localises to the cytoplasm. Recruits the ubiquitination machinery to RNA polymerase II for polyubiquitination, removal and degradation, when the transcription-coupled nucleotide excision repair (TC-NER) machinery fails to resolve DNA damage. May promote the degradation of ANXA2. In Homo sapiens (Human), this protein is Ubiquitin-associated protein 2.